Consider the following 152-residue polypeptide: Xanthine-guanine phosphoribosyltransferase (152 aa).

5-phospho-alpha-D-ribose 1-diphosphate contacts are provided by residues Arg37–Gly38 and Asp88–Thr96. Asp89 serves as a coordination point for Mg(2+). Guanine is bound by residues Asp92 and Ile135. Residues Asp92 and Ile135 each contribute to the xanthine site. Residues Asp92–Thr96 and Trp134–Ile135 each bind GMP.

Belongs to the purine/pyrimidine phosphoribosyltransferase family. XGPT subfamily. Homotetramer. The cofactor is Mg(2+).

It is found in the cell inner membrane. The enzyme catalyses GMP + diphosphate = guanine + 5-phospho-alpha-D-ribose 1-diphosphate. It catalyses the reaction XMP + diphosphate = xanthine + 5-phospho-alpha-D-ribose 1-diphosphate. It carries out the reaction IMP + diphosphate = hypoxanthine + 5-phospho-alpha-D-ribose 1-diphosphate. Its pathway is purine metabolism; GMP biosynthesis via salvage pathway; GMP from guanine: step 1/1. It functions in the pathway purine metabolism; XMP biosynthesis via salvage pathway; XMP from xanthine: step 1/1. In terms of biological role, purine salvage pathway enzyme that catalyzes the transfer of the ribosyl-5-phosphate group from 5-phospho-alpha-D-ribose 1-diphosphate (PRPP) to the N9 position of the 6-oxopurines guanine and xanthine to form the corresponding ribonucleotides GMP (guanosine 5'-monophosphate) and XMP (xanthosine 5'-monophosphate), with the release of PPi. To a lesser extent, also acts on hypoxanthine. The polypeptide is Xanthine-guanine phosphoribosyltransferase (Mannheimia succiniciproducens (strain KCTC 0769BP / MBEL55E)).